The chain runs to 426 residues: Glutamate-1-semialdehyde 2,1-aminomutase 2 (426 aa).

Position 265 is an N6-(pyridoxal phosphate)lysine (Lys265).

The protein belongs to the class-III pyridoxal-phosphate-dependent aminotransferase family. HemL subfamily. In terms of assembly, homodimer. The cofactor is pyridoxal 5'-phosphate.

The protein localises to the cytoplasm. It carries out the reaction (S)-4-amino-5-oxopentanoate = 5-aminolevulinate. The protein operates within porphyrin-containing compound metabolism; protoporphyrin-IX biosynthesis; 5-aminolevulinate from L-glutamyl-tRNA(Glu): step 2/2. In Lachnoclostridium phytofermentans (strain ATCC 700394 / DSM 18823 / ISDg) (Clostridium phytofermentans), this protein is Glutamate-1-semialdehyde 2,1-aminomutase 2.